We begin with the raw amino-acid sequence, 199 residues long: Pyridoxal 5'-phosphate synthase subunit PdxT (199 aa).

Position 47–49 (47–49 (GES)) interacts with L-glutamine. Cysteine 79 acts as the Nucleophile in catalysis. L-glutamine-binding positions include arginine 106 and 133–134 (IR). Active-site charge relay system residues include histidine 169 and glutamate 171.

This sequence belongs to the glutaminase PdxT/SNO family. As to quaternary structure, in the presence of PdxS, forms a dodecamer of heterodimers. Only shows activity in the heterodimer.

It carries out the reaction aldehydo-D-ribose 5-phosphate + D-glyceraldehyde 3-phosphate + L-glutamine = pyridoxal 5'-phosphate + L-glutamate + phosphate + 3 H2O + H(+). It catalyses the reaction L-glutamine + H2O = L-glutamate + NH4(+). It participates in cofactor biosynthesis; pyridoxal 5'-phosphate biosynthesis. Its function is as follows. Catalyzes the hydrolysis of glutamine to glutamate and ammonia as part of the biosynthesis of pyridoxal 5'-phosphate. The resulting ammonia molecule is channeled to the active site of PdxS. This is Pyridoxal 5'-phosphate synthase subunit PdxT from Desulfitobacterium hafniense (strain Y51).